Here is a 119-residue protein sequence, read N- to C-terminus: Protein FATTY ACID EXPORT 5 (119 aa).

Transmembrane regions (helical) follow at residues 27–47 (SIAS…AGFI), 57–77 (TSLL…FVMG), and 85–105 (KIMP…FYVY).

Belongs to the TMEM14 family.

The protein resides in the membrane. Functionally, may be involved in free fatty acids export. The sequence is that of Protein FATTY ACID EXPORT 5 from Arabidopsis thaliana (Mouse-ear cress).